The following is a 129-amino-acid chain: Large ribosomal subunit protein uL22 (129 aa).

This sequence belongs to the universal ribosomal protein uL22 family. Part of the 50S ribosomal subunit.

In terms of biological role, this protein binds specifically to 23S rRNA; its binding is stimulated by other ribosomal proteins, e.g. L4, L17, and L20. It is important during the early stages of 50S assembly. It makes multiple contacts with different domains of the 23S rRNA in the assembled 50S subunit and ribosome. Its function is as follows. The globular domain of the protein is located near the polypeptide exit tunnel on the outside of the subunit, while an extended beta-hairpin is found that lines the wall of the exit tunnel in the center of the 70S ribosome. This Rhizobium etli (strain ATCC 51251 / DSM 11541 / JCM 21823 / NBRC 15573 / CFN 42) protein is Large ribosomal subunit protein uL22.